Consider the following 627-residue polypeptide: MRRPKKYESGEATQYISRRAALRKLQLSLNDFRRLCILKGVYPREPKHRRRAQKGSSEIRVLYHTKDIRFLLHEQIVWTLRDYKIFAKKSNRDRAIKDFRNLKRRLALFPEIKLDHIVKERYPTFIDALKDLDDCLTLLFLFSTFPSLHLIPREQSNLCRRLTVEFLHYVIASKSLRKVFISIKGYYFQAEIKGQKVTWIVPHYYPFKPQSRQEVDFKVMSIFVEFYTIMLGFTNFRLFHGLNLAYPPQFPTNMLQDNEDTFKDESSFVSDRIAALNFELLRTDKVQEDEEELDIDMELLEQDGDSKRIIKMKQEAQEVARLRTLFKGLKFFINREVPREPLVIIIRSFGGKVSWDSSIFPGSTFDESDETITHQIVDRPSLATQYISRDYIQPQWLFDCVNQRQLLPTNKYFIGEKLPPHLSPFVDSKRDTYIPPEEKALHDPSLIETHEQSDDDSDEEAAQEEEEAVDQELLDAQLQLAYQQETAEYKKYGGPDGVNEDEEDPEEDEEDEDEEEEEELDEQAKRLKEEKQKMSVQSGKVHKVNKRQLHKAEVDEHRLQARMVKPRHRNLFRKLIREKQTKEKEEWLLRKKRRTFEAGEKEARKTAKRAARKEAAAAAAKASKLGK.

Residues 321–414 (RLRTLFKGLK…QLLPTNKYFI (94 aa)) form the BRCT domain. Disordered stretches follow at residues 436–471 (PEEK…AVDQ), 489–562 (YKKY…LQAR), and 596–627 (FEAG…KLGK). A phosphoserine mark is found at Ser-453 and Ser-457. 2 stretches are compositionally biased toward acidic residues: residues 453 to 471 (SDDD…AVDQ) and 498 to 521 (VNED…EELD). The span at 522 to 533 (EQAKRLKEEKQK) shows a compositional bias: basic and acidic residues. Over residues 540–549 (KVHKVNKRQL) the composition is skewed to basic residues. Composition is skewed to basic and acidic residues over residues 550 to 559 (HKAEVDEHRL) and 596 to 605 (FEAGEKEARK). A compositionally biased stretch (low complexity) spans 616–627 (AAAAAKASKLGK).

Belongs to the pescadillo family.

It is found in the nucleus. The protein localises to the nucleolus. Its subcellular location is the nucleoplasm. Functionally, required for maturation of ribosomal RNAs and formation of the large ribosomal subunit. This is Pescadillo homolog from Drosophila ananassae (Fruit fly).